A 139-amino-acid polypeptide reads, in one-letter code: Exodeoxyribonuclease 7 small subunit (139 aa).

2 disordered regions span residues 1 to 26 and 82 to 139; these read MAKK…LGDF and DAEG…EDDE. The segment covering 130-139 has biased composition (acidic residues); sequence ADLDSAEDDE.

It belongs to the XseB family. In terms of assembly, heterooligomer composed of large and small subunits.

The protein resides in the cytoplasm. It catalyses the reaction Exonucleolytic cleavage in either 5'- to 3'- or 3'- to 5'-direction to yield nucleoside 5'-phosphates.. In terms of biological role, bidirectionally degrades single-stranded DNA into large acid-insoluble oligonucleotides, which are then degraded further into small acid-soluble oligonucleotides. The polypeptide is Exodeoxyribonuclease 7 small subunit (Rhodopirellula baltica (strain DSM 10527 / NCIMB 13988 / SH1)).